The chain runs to 370 residues: 2-oxoisovalerate dehydrogenase subunit beta, mitochondrial (370 aa).

Residues 1–25 constitute a mitochondrion transit peptide; it reads MLRGNNIKKVNSLLVRSFHSTVGNR. Tyr-130 provides a ligand contact to thiamine diphosphate. 4 residues coordinate K(+): Gly-156, Leu-158, Thr-159, and Glu-209.

Heterotetramer of 2 alpha and 2 beta chains. The cofactor is thiamine diphosphate.

The protein resides in the mitochondrion matrix. It carries out the reaction N(6)-[(R)-lipoyl]-L-lysyl-[protein] + 3-methyl-2-oxobutanoate + H(+) = N(6)-[(R)-S(8)-2-methylpropanoyldihydrolipoyl]-L-lysyl-[protein] + CO2. Functionally, the branched-chain alpha-keto dehydrogenase complex catalyzes the overall conversion of alpha-keto acids to acyl-CoA and CO(2). It contains multiple copies of three enzymatic components: branched-chain alpha-keto acid decarboxylase (E1), lipoamide acyltransferase (E2) and lipoamide dehydrogenase (E3). The polypeptide is 2-oxoisovalerate dehydrogenase subunit beta, mitochondrial (bkdB) (Dictyostelium discoideum (Social amoeba)).